We begin with the raw amino-acid sequence, 175 residues long: Alpha-crystallin B chain (175 aa).

Position 1 is an N-acetylmethionine (M1). A phosphoserine mark is found at S19, S45, and S59. The sHSP domain maps to 56 to 164 (RAPSWIDTGL…PERTIPITRE (109 aa)). Zn(2+) is bound at residue H83. Position 92 is an N6-acetyllysine (K92). Residues H104, E106, H111, and H119 each contribute to the Zn(2+) site. Residues 145-175 (VNGPRKQASGPERTIPITREEKPAVTAAPKK) are disordered. Position 166 is an N6-acetyllysine (K166). An O-linked (GlcNAc) threonine glycan is attached at T170.

This sequence belongs to the small heat shock protein (HSP20) family. As to quaternary structure, heteromer composed of three CRYAA and one CRYAB subunits. Aggregates with homologous proteins, including the small heat shock protein HSPB1, to form large heteromeric complexes. Inter-subunit bridging via zinc ions enhances stability, which is crucial as there is no protein turn over in the lens. Interacts with HSPBAP1 and TTN/titin. Interacts with TMEM109; in the cellular response to DNA damage. Interacts with DES; binds rapidly during early stages of DES filament assembly and a reduced binding seen in the later stages. Interacts with TMED10; the interaction mediates the translocation from the cytoplasm into the ERGIC (endoplasmic reticulum-Golgi intermediate compartment) and thereby secretion. Interacts with ATP6V1A and with MTOR, forming a ternary complex. As to expression, lens as well as other tissues.

Its subcellular location is the cytoplasm. The protein resides in the nucleus. It is found in the secreted. It localises to the lysosome. Its function is as follows. May contribute to the transparency and refractive index of the lens. Has chaperone-like activity, preventing aggregation of various proteins under a wide range of stress conditions. In lens epithelial cells, stabilizes the ATP6V1A protein, preventing its degradation by the proteasome. The polypeptide is Alpha-crystallin B chain (CRYAB) (Mesocricetus auratus (Golden hamster)).